The chain runs to 284 residues: Isopentenyl-diphosphate delta-isomerase (284 aa).

A substrate-binding site is contributed by lysine 77. Mg(2+) is bound by residues histidine 81 and histidine 92. Positions 90–256 (LLHRAFSVFL…SLVFTPWFKL (167 aa)) constitute a Nudix hydrolase domain. The substrate site is built by arginine 111 and lysine 115. Cysteine 127 is an active-site residue. Serine 128 is a substrate binding site. The Nudix box motif lies at 128-172 (SHPLCVPSELGVDSSLEGSKDVNNLTNAVKGAKVAAQRKLEHELG). Mg(2+) is bound by residues glutamate 204 and glutamate 206. Glutamate 206 is a catalytic residue.

It belongs to the IPP isomerase type 1 family. Requires Mg(2+) as cofactor.

The protein localises to the cytoplasm. It catalyses the reaction isopentenyl diphosphate = dimethylallyl diphosphate. It functions in the pathway isoprenoid biosynthesis; dimethylallyl diphosphate biosynthesis; dimethylallyl diphosphate from isopentenyl diphosphate: step 1/1. In terms of biological role, isopentenyl-diphosphate delta-isomerase; part of the second module of ergosterol biosynthesis pathway that includes the middle steps of the pathway. IDI1 catalyzes the 1,3-allylic rearrangement of isopentenyl (IPP) to its highly electrophilic allylic isomer, dimethylallyl diphosphate (DMAPP). The second module is carried out in the vacuole and involves the formation of farnesyl diphosphate, which is also an important intermediate in the biosynthesis of ubiquinone, dolichol, heme and prenylated proteins. Activity by the mevalonate kinase ERG12 first converts mevalonate into 5-phosphomevalonate. 5-phosphomevalonate is then further converted to 5-diphosphomevalonate by the phosphomevalonate kinase ERG8. The diphosphomevalonate decarboxylase MVD then produces isopentenyl diphosphate. The isopentenyl-diphosphate delta-isomerase IDI1 then catalyzes the 1,3-allylic rearrangement of the homoallylic substrate isopentenyl (IPP) to its highly electrophilic allylic isomer, dimethylallyl diphosphate (DMAPP). Finally the farnesyl diphosphate synthase ERG20 catalyzes the sequential condensation of isopentenyl pyrophosphate with dimethylallyl pyrophosphate, and then with the resultant geranylpyrophosphate to the ultimate product farnesyl pyrophosphate. The chain is Isopentenyl-diphosphate delta-isomerase from Candida albicans (strain SC5314 / ATCC MYA-2876) (Yeast).